The chain runs to 474 residues: HTH-type transcriptional regulator RamB (474 aa).

The 55-residue stretch at 10 to 64 (VRQLRNERGFSQAALAQMLEISPSYLNQIEHDVRPLTVAVLLRITEVFGVDATFF) folds into the HTH cro/C1-type domain. The segment at residues 21–40 (QAALAQMLEISPSYLNQIEH) is a DNA-binding region (H-T-H motif).

It belongs to the short-chain fatty acyl-CoA assimilation regulator (ScfR) family.

Its function is as follows. Involved in the control of the glyoxylate cycle. RamB negatively controls the expression of icl expression during growth on acetate as the sole carbon source. This is HTH-type transcriptional regulator RamB from Mycobacterium tuberculosis (strain CDC 1551 / Oshkosh).